Here is an 87-residue protein sequence, read N- to C-terminus: MKTLLLTLVVVTIVCLDLGYTMKCKICHFDTCRAGELKVCASGEKYCFKESWREARGTRIERGCAATCPKGSVYGLYVLCCTTDDCN.

Positions 1-21 (MKTLLLTLVVVTIVCLDLGYT) are cleaved as a signal peptide. 5 cysteine pairs are disulfide-bonded: Cys-24/Cys-47, Cys-27/Cys-32, Cys-40/Cys-64, Cys-68/Cys-80, and Cys-81/Cys-86.

In terms of tissue distribution, expressed by the venom gland.

The protein resides in the secreted. Functionally, inhibits carbachol-induced muscle contraction in a reversible manner. This Bungarus multicinctus (Many-banded krait) protein is Long neurotoxin homolog.